The chain runs to 102 residues: Fe-S protein maturation auxiliary factor YitW (102 aa).

This sequence belongs to the MIP18 family.

Involved in the maturation of iron-sulfur (Fe-S) proteins. May function as a Fe-S cluster carrier. The chain is Fe-S protein maturation auxiliary factor YitW (yitW) from Bacillus subtilis (strain 168).